The following is a 170-amino-acid chain: Adenine phosphoribosyltransferase (170 aa).

Belongs to the purine/pyrimidine phosphoribosyltransferase family. In terms of assembly, homodimer.

It localises to the cytoplasm. It catalyses the reaction AMP + diphosphate = 5-phospho-alpha-D-ribose 1-diphosphate + adenine. Its pathway is purine metabolism; AMP biosynthesis via salvage pathway; AMP from adenine: step 1/1. Catalyzes a salvage reaction resulting in the formation of AMP, that is energically less costly than de novo synthesis. The polypeptide is Adenine phosphoribosyltransferase (Geobacillus sp. (strain WCH70)).